Here is a 553-residue protein sequence, read N- to C-terminus: Putative ABC transporter ATP-binding protein BCE_3323 (553 aa).

ABC transporter domains are found at residues 7–245 and 295–527; these read AEIN…FRPF and LSAE…SINR. Residues 41-48 and 329-336 each bind ATP; these read GGSGSGKT and GKNGTGKS.

This sequence belongs to the ABC transporter superfamily.

The protein resides in the cell membrane. In terms of biological role, probably part of an ABC transporter complex. Responsible for energy coupling to the transport system. In Bacillus cereus (strain ATCC 10987 / NRS 248), this protein is Putative ABC transporter ATP-binding protein BCE_3323.